The following is a 790-amino-acid chain: Protein SEY1 (790 aa).

Topologically, residues 1-692 (MELSEGELSH…KRSIVQHITQ (692 aa)) are cytoplasmic. A GB1/RHD3-type G domain is found at 55-284 (GNNYHIISVF…VSNELFKPEY (230 aa)). GTP is bound at residue 65–72 (GSQSTGKS). Residues 693–713 (IPYYIYLIILVLGWNEFMAII) form a helical membrane-spanning segment. At 714–716 (RNP) the chain is on the lumenal side. A helical membrane pass occupies residues 717 to 737 (LFFSLSIVLGATVYVLYYLGL). Residues 738–790 (LRPALVVAQRTMDEVIVMAKTKLREVLIDDHEVTGRQLNKMAGSKENIELDDM) are Cytoplasmic-facing.

The protein belongs to the TRAFAC class dynamin-like GTPase superfamily. GB1/RHD3 GTPase family. RHD3 subfamily.

It localises to the endoplasmic reticulum membrane. Cooperates with the reticulon proteins and tubule-shaping DP1 family proteins to generate and maintain the structure of the tubular endoplasmic reticulum network. Has GTPase activity, which is required for its function in ER organization. Required for virulence and resistance to cycloheximide. This chain is Protein SEY1, found in Candida albicans (strain SC5314 / ATCC MYA-2876) (Yeast).